We begin with the raw amino-acid sequence, 516 residues long: UDP-N-acetylmuramyl-tripeptide synthetase (516 aa).

Ser-36 is a binding site for UDP-N-acetyl-alpha-D-muramoyl-L-alanyl-D-glutamate. 113–119 (GTKGKTT) serves as a coordination point for ATP. UDP-N-acetyl-alpha-D-muramoyl-L-alanyl-D-glutamate-binding positions include 159–160 (TT), Ser-186, and Arg-194. Lys-228 is modified (N6-carboxylysine).

It belongs to the MurCDEF family. MurE subfamily. Post-translationally, carboxylation is probably crucial for Mg(2+) binding and, consequently, for the gamma-phosphate positioning of ATP.

It is found in the cytoplasm. It participates in cell wall biogenesis; peptidoglycan biosynthesis. Functionally, catalyzes the addition of an amino acid to the nucleotide precursor UDP-N-acetylmuramoyl-L-alanyl-D-glutamate (UMAG) in the biosynthesis of bacterial cell-wall peptidoglycan. This is UDP-N-acetylmuramyl-tripeptide synthetase from Limosilactobacillus reuteri (strain DSM 20016) (Lactobacillus reuteri).